The chain runs to 206 residues: ATP phosphoribosyltransferase (206 aa).

The protein belongs to the ATP phosphoribosyltransferase family. Short subfamily. Heteromultimer composed of HisG and HisZ subunits.

It is found in the cytoplasm. It carries out the reaction 1-(5-phospho-beta-D-ribosyl)-ATP + diphosphate = 5-phospho-alpha-D-ribose 1-diphosphate + ATP. The protein operates within amino-acid biosynthesis; L-histidine biosynthesis; L-histidine from 5-phospho-alpha-D-ribose 1-diphosphate: step 1/9. Catalyzes the condensation of ATP and 5-phosphoribose 1-diphosphate to form N'-(5'-phosphoribosyl)-ATP (PR-ATP). Has a crucial role in the pathway because the rate of histidine biosynthesis seems to be controlled primarily by regulation of HisG enzymatic activity. The polypeptide is ATP phosphoribosyltransferase (Leptospira interrogans serogroup Icterohaemorrhagiae serovar copenhageni (strain Fiocruz L1-130)).